Consider the following 67-residue polypeptide: Large ribosomal subunit protein bL35 (67 aa).

The interval 1 to 41 (MPKMKTHRGAAKRFKKTGTGKLKRSHAYTSHMFRHKSQKQK) is disordered.

The protein belongs to the bacterial ribosomal protein bL35 family.

In Shouchella clausii (strain KSM-K16) (Alkalihalobacillus clausii), this protein is Large ribosomal subunit protein bL35.